Reading from the N-terminus, the 368-residue chain is MEDDRVFSSVHSTVFKESESLEGKCDKIEGYDFNQGVDYPKLMRSMLTTGFQASNLGEAIDVVNQMLDWRLADETTVAEDCSEEEKNPSFRESVKCKIFLGFTSNLVSSGVRDTIRYLVQHHMVDVIVTTTGGVEEDLIKCLAPTFKGDFSLPGAYLRSKGLNRIGNLLVPNDNYCKFEDWIIPIFDEMLKEQKEENVLWTPSKLLARLGKEINNESSYLYWAYKMNIPVFCPGLTDGSLGDMLYFHSFRTSGLIIDVVQDIRAMNGEAVHANPKKTGMIILGGGLPKHHICNANMMRNGADYAVFINTGQEFDGSDSGARPDEAVSWGKIRGSAKTVKVYCDATIAFPLLVAETFATKRDQTCESKT.

Residues 104–108 (SNLVS), 130–132 (TTG), glutamate 136, and aspartate 237 contribute to the NAD(+) site. Residue 135-136 (EE) coordinates spermidine. Aspartate 242 is a binding site for spermidine. Glycine 284 contributes to the NAD(+) binding site. Residue histidine 289 participates in spermidine binding. 309–310 (TG) is an NAD(+) binding site. Spermidine is bound by residues 315-317 (GSD) and 324-330 (EAVSWGK). Catalysis depends on lysine 330, which acts as the Nucleophile. An NAD(+)-binding site is contributed by 343–344 (DA).

This sequence belongs to the deoxyhypusine synthase family. Requires NAD(+) as cofactor.

It carries out the reaction [eIF5A protein]-L-lysine + spermidine = [eIF5A protein]-deoxyhypusine + propane-1,3-diamine. It functions in the pathway protein modification; eIF5A hypusination. Functionally, catalyzes the NAD-dependent oxidative cleavage of spermidine and the subsequent transfer of the butylamine moiety of spermidine to the epsilon-amino group of a specific lysine residue of the eIF-5A precursor protein to form the intermediate deoxyhypusine residue. Also able to produce homospermidine from putrescine. This is Deoxyhypusine synthase (DHS) from Arabidopsis thaliana (Mouse-ear cress).